Consider the following 332-residue polypeptide: Phosphate acyltransferase (332 aa).

The protein belongs to the PlsX family. As to quaternary structure, homodimer. Probably interacts with PlsY.

Its subcellular location is the cytoplasm. The enzyme catalyses a fatty acyl-[ACP] + phosphate = an acyl phosphate + holo-[ACP]. Its pathway is lipid metabolism; phospholipid metabolism. Its function is as follows. Catalyzes the reversible formation of acyl-phosphate (acyl-PO(4)) from acyl-[acyl-carrier-protein] (acyl-ACP). This enzyme utilizes acyl-ACP as fatty acyl donor, but not acyl-CoA. The sequence is that of Phosphate acyltransferase from Clostridium novyi (strain NT).